The sequence spans 483 residues: Phosphoglucosamine mutase (483 aa).

Ser-131 serves as the catalytic Phosphoserine intermediate. Residues Ser-131, Asp-272, Asp-274, and Asp-276 each coordinate Mg(2+). Ser-131 carries the post-translational modification Phosphoserine.

Belongs to the phosphohexose mutase family. It depends on Mg(2+) as a cofactor. Post-translationally, activated by phosphorylation.

The enzyme catalyses alpha-D-glucosamine 1-phosphate = D-glucosamine 6-phosphate. Catalyzes the conversion of glucosamine-6-phosphate to glucosamine-1-phosphate. The polypeptide is Phosphoglucosamine mutase (Magnetococcus marinus (strain ATCC BAA-1437 / JCM 17883 / MC-1)).